Here is a 327-residue protein sequence, read N- to C-terminus: Phenylalanine--tRNA ligase alpha subunit (327 aa).

Residue Glu-252 coordinates Mg(2+).

This sequence belongs to the class-II aminoacyl-tRNA synthetase family. Phe-tRNA synthetase alpha subunit type 1 subfamily. In terms of assembly, tetramer of two alpha and two beta subunits. It depends on Mg(2+) as a cofactor.

The protein resides in the cytoplasm. It carries out the reaction tRNA(Phe) + L-phenylalanine + ATP = L-phenylalanyl-tRNA(Phe) + AMP + diphosphate + H(+). This is Phenylalanine--tRNA ligase alpha subunit from Shewanella baltica (strain OS185).